Consider the following 164-residue polypeptide: MLRSIQHVEALSSRQISTTSMLLKNRAGKTKSTSNRTQLLTYEMAQKPHHIGVRKSWLTWHSQNLEEFRQSQPLVVAQDEVVRRFIRGFFPQNLVVSGNEIVIKRRGNVLIVAGFLQYSRRLDIRRIYWMFGFAEEFLSILLKQPVKLEMAFVESEEDVAYNYI.

Residues 1 to 23 (MLRSIQHVEALSSRQISTTSMLL) constitute a mitochondrion transit peptide.

This sequence belongs to the universal ribosomal protein uS3 family. In terms of assembly, component of the mitochondrial ribosome small subunit (28S) which comprises a 12S rRNA and about 30 distinct proteins.

It is found in the mitochondrion. The chain is Small ribosomal subunit protein uS3m (mrps-24) from Caenorhabditis elegans.